The sequence spans 2483 residues: Cation-independent mannose-6-phosphate receptor (2483 aa).

The N-terminal stretch at 1 to 35 (MRAVQLGPVPSGPRVALLPPLLLLLLLAAAGSAQA) is a signal peptide. Topologically, residues 36–2295 (QAVDLDALCS…YKGLSERSQA (2260 aa)) are lumenal. MRH domains lie at 42–158 (ALCS…ACKK), 167–315 (VPCY…ACHR), 321–463 (ESCS…ACIK), 468–613 (LLCG…ACVL), 619–755 (ENCT…ACPE), 758–917 (LECM…ACPI), 925–1072 (QACS…ACTP), 1075–1212 (VDCQ…ACPV), and 1218–1356 (DNCQ…ACPP). Cystine bridges form between C44-C64 and C72-C79. N107 carries an N-linked (GlcNAc...) asparagine glycan. Intrachain disulfides connect C112-C144, C129-C156, C169-C207, C223-C230, C270-C301, C283-C313, C323-C361, and C369-C377. N-linked (GlcNAc...) asparagine glycosylation is found at N395 and N430. Cystine bridges form between C415–C449, C429–C461, C470–C513, and C525–C532. N-linked (GlcNAc...) asparagine glycosylation is found at N537 and N575. Cystine bridges form between C566/C599 and C580/C611. N-linked (GlcNAc...) asparagine glycosylation is present at N620. Intrachain disulfides connect C621–C658, C666–C673, C724–C753, C760–C807, and C816–C823. N740 carries an N-linked (GlcNAc...) asparagine glycan. N864 carries an N-linked (GlcNAc...) asparagine glycan. Cystine bridges form between C868/C903, C886/C915, C927/C964, C970/C981, C1035/C1070, C1077/C1118, and C1127/C1135. N-linked (GlcNAc...) asparagine glycosylation occurs at N944. An N-linked (GlcNAc...) asparagine glycan is attached at N1157. Cystine bridges form between C1170–C1198, C1183–C1210, C1220–C1255, and C1263–C1275. An N-linked (GlcNAc...) asparagine glycan is attached at N1239. N-linked (GlcNAc...) asparagine glycosylation occurs at N1305. Intrachain disulfides connect C1312–C1342 and C1326–C1354. N-linked (GlcNAc...) asparagine glycosylation occurs at N1358. MRH domains follow at residues 1360–1501 (TECS…ACPV), 1507–1641 (DDCQ…ACEQ), 1643–1790 (TECT…VCPD), 1795–1982 (QGCA…VCPP), 1985–2120 (MECK…ACAV), and 2128–2273 (VNGT…VCPL). 2 disulfides stabilise this stretch: C1362-C1401 and C1413-C1420. N1423 carries N-linked (GlcNAc...) asparagine glycosylation. 20 cysteine pairs are disulfide-bonded: C1454-C1487, C1469-C1499, C1509-C1546, C1552-C1559, C1591-C1627, C1607-C1639, C1645-C1688, C1699-C1706, C1743-C1776, C1759-C1788, C1797-C1832, C1843-C1849, C1886-C1968, C1896-C1920, C1910-C1935, C1950-C1980, C1987-C2022, C2032-C2039, C2075-C2106, and C2089-C2118. The N-linked (GlcNAc...) asparagine glycan is linked to N1532. Residue N1649 is glycosylated (N-linked (GlcNAc...) asparagine). An N-linked (GlcNAc...) asparagine glycan is attached at N1750. N-linked (GlcNAc...) asparagine glycosylation is present at N1809. The region spanning 1891–1937 (DDGEPCVFPFIYKGKSYDECVLEGRAKLWCSKTANYDRDHEWGFCRQ) is the Fibronectin type-II domain. N2078 is a glycosylation site (N-linked (GlcNAc...) asparagine). N2129 carries an N-linked (GlcNAc...) asparagine glycan. 3 disulfide bridges follow: C2181–C2187, C2225–C2259, and C2241–C2271. A helical transmembrane segment spans residues 2296–2316 (VGAVLSLLLVALTGCLLALLL). Residues 2317–2483 (HKKERRETVI…DDSDEDLLHI (167 aa)) are Cytoplasmic-facing. An N6-acetyllysine modification is found at K2342. Residue S2401 is modified to Phosphoserine. Residues 2415 to 2483 (SGRGAEVESS…DDSDEDLLHI (69 aa)) are disordered. R2417 bears the Omega-N-methylarginine mark. Basic and acidic residues-rich tracts occupy residues 2434 to 2451 (VLKEREGERLGLVRGEKA) and 2471 to 2483 (SFHDDSDEDLLHI). S2471 and S2476 each carry phosphoserine.

It belongs to the MRL1/IGF2R family. Binds HA-I and HA-II plasma membrane adapters. Interacts with DPP4; the interaction is direct. Binds GGA1, GGA2 and GGA3. Interacts with the heterotrimeric retromer cargo-selective complex (CSC), formed by VPS26 (VPS26A or VPS26B), VPS29 and VPS35; which is involved in retrograde trafficking of the receptor from endosomes to the Golgi apparatus. Post-translationally, palmitoylated. Undergoes cysteine S-palmitoylation which promotes interaction with the retromer cargo-selective complex which mediates its retrograde trafficking to the Golgi apparatus.

It is found in the golgi apparatus membrane. The protein localises to the endosome membrane. Functionally, mediates the transport of phosphorylated lysosomal enzymes from the Golgi complex and the cell surface to lysosomes. Lysosomal enzymes bearing phosphomannosyl residues bind specifically to mannose-6-phosphate receptors in the Golgi apparatus and the resulting receptor-ligand complex is transported to an acidic prelysosomal compartment where the low pH mediates the dissociation of the complex. The receptor is then recycled back to the Golgi for another round of trafficking through its binding to the retromer. This receptor also binds IGF2. Acts as a positive regulator of T-cell coactivation by binding DPP4. In Mus musculus (Mouse), this protein is Cation-independent mannose-6-phosphate receptor (Igf2r).